A 464-amino-acid polypeptide reads, in one-letter code: Arginine biosynthesis bifunctional protein ArgJ, mitochondrial (464 aa).

Substrate is bound by residues Thr191, Lys220, Thr231, Glu318, Asn459, and Thr464. The Nucleophile role is filled by Thr231.

This sequence belongs to the ArgJ family. As to quaternary structure, heterodimer of an alpha and a beta chain. Post-translationally, the alpha and beta chains are autoproteolytically processed from a single precursor protein within the mitochondrion.

Its subcellular location is the mitochondrion matrix. The enzyme catalyses N(2)-acetyl-L-ornithine + L-glutamate = N-acetyl-L-glutamate + L-ornithine. It catalyses the reaction L-glutamate + acetyl-CoA = N-acetyl-L-glutamate + CoA + H(+). The protein operates within amino-acid biosynthesis; L-arginine biosynthesis; L-ornithine and N-acetyl-L-glutamate from L-glutamate and N(2)-acetyl-L-ornithine (cyclic): step 1/1. Its pathway is amino-acid biosynthesis; L-arginine biosynthesis; N(2)-acetyl-L-ornithine from L-glutamate: step 1/4. In terms of biological role, catalyzes two activities which are involved in the cyclic version of arginine biosynthesis: the synthesis of acetylglutamate from glutamate and acetyl-CoA, and of ornithine by transacetylation between acetylornithine and glutamate. The protein is Arginine biosynthesis bifunctional protein ArgJ, mitochondrial of Pyricularia oryzae (strain 70-15 / ATCC MYA-4617 / FGSC 8958) (Rice blast fungus).